The sequence spans 743 residues: POU domain, class 2, transcription factor 1 (743 aa).

Residues 1-11 show a composition bias toward polar residues; sequence MNNPSETSKPS. Disordered regions lie at residues 1–34, 67–95, 258–283, and 357–381; these read MNNPSETSKPSMESGDGNTGTQTNGLDFQKQPVP, SLNVQSKSNEESGDSQQPSQPSQQPSVQA, ATPIQTLPQSQSTPKRIDTPSLEEPS, and SSDSSLSSPSALNSPGIEGLSRRRK. Residues 81 to 95 show a composition bias toward low complexity; the sequence is SQQPSQPSQQPSVQA. 2 positions are modified to phosphothreonine: Thr270 and Thr276. Positions 280–354 constitute a POU-specific domain; the sequence is EEPSDLEELE…LLEKWLNDAE (75 aa). A Phosphoserine modification is found at Ser283. The span at 357 to 371 shows a compositional bias: low complexity; it reads SSDSSLSSPSALNSP. Positions 379-438 form a DNA-binding region, homeobox; the sequence is RRKKRTSIETNIRVALEKSFLENQKPTSEEITMIADQLNMEKEVIRVWFCNRRQKEKRIN. Ser385 and Ser448 each carry phosphoserine. Residues 494–504 are compositionally biased toward polar residues; it reads VTGTSDTTSNN. The segment at 494–557 is disordered; sequence VTGTSDTTSN…TTSTPLSSPL (64 aa). The segment covering 505–557 has biased composition (low complexity); it reads TATVISTAPPASSAVTSPSLSPSPSASASTSEASSASETSTTQTTSTPLSSPL.

This sequence belongs to the POU transcription factor family. Class-2 subfamily. In terms of assembly, interacts with POU2AF1; the interaction increases POU2F1 transactivation activity. Interacts with NR3C1, AR, PGR and HCFC1. (Microbial infection) Associates with the herpes simplex virus VP16-induced complex; binding to HCFC1 activates the viral transcriptional activator VP16 for association with POU2F1, to form a multiprotein-DNA complex responsible for activating transcription of the viral immediate early genes. As to quaternary structure, (Microbial infection) Interacts with human herpesvirus 8 (KSHV) protein RTA/ORF50; this interaction enhances RTA/ORF50-mediated transactivation of several viral promoters including K-bZIP promoter. Post-translationally, phosphorylated by PRKDC. As to expression, ubiquitous. Isoform 2 is lymphocyte-specific.

It localises to the nucleus. In terms of biological role, transcription factor that binds to the octamer motif (5'-ATTTGCAT-3') and activates the promoters of the genes for some small nuclear RNAs (snRNA) and of genes such as those for histone H2B and immunoglobulins. Modulates transcription transactivation by NR3C1, AR and PGR. (Microbial infection) In case of human herpes simplex virus (HSV) infection, POU2F1 forms a multiprotein-DNA complex with the viral transactivator protein VP16 and HCFC1 thereby enabling the transcription of the viral immediate early genes. The protein is POU domain, class 2, transcription factor 1 (POU2F1) of Homo sapiens (Human).